The primary structure comprises 51 residues: Sperm protamine P1 (51 aa).

It belongs to the protamine P1 family. In terms of assembly, cross-linked by interchain disulfide bonds around the DNA-helix. Testis.

The protein localises to the nucleus. It localises to the chromosome. Its function is as follows. Protamines substitute for histones in the chromatin of sperm during the haploid phase of spermatogenesis. They compact sperm DNA into a highly condensed, stable and inactive complex. The protein is Sperm protamine P1 (PRM1) of Pongo pygmaeus (Bornean orangutan).